The following is a 474-amino-acid chain: Iroquois-class homeodomain protein IRX-2 (474 aa).

Positions 115-177 (DPAYRKNATR…NARRRLKKEN (63 aa)) form a DNA-binding region, homeobox; TALE-type. Disordered regions lie at residues 177-220 (NKMT…EDEG), 262-373 (EDLE…PGGS), and 420-461 (PGET…DTSE). Ser187 is subject to Phosphoserine. The span at 196–210 (DASRSKEESSDKAQD) shows a compositional bias: basic and acidic residues. A compositionally biased stretch (acidic residues) spans 262 to 275 (EDLEDEEDEEDECE). 2 stretches are compositionally biased toward low complexity: residues 293 to 305 (EAPL…EAAP) and 358 to 373 (PAAA…PGGS).

Belongs to the TALE/IRO homeobox family. In terms of tissue distribution, expressed in specific and overlapping patterns with Irx1 and Irx3 in the developing and adult metanephric kidney. In the adult metanephros, renal expression is found in the loop of Henle in the S3 proximal tubule segment and in the thick ascending limb (TAL) of the distal tubule.

The protein localises to the nucleus. The sequence is that of Iroquois-class homeodomain protein IRX-2 (Irx2) from Mus musculus (Mouse).